Consider the following 146-residue polypeptide: Cyanate hydratase (146 aa).

Catalysis depends on residues Arg-87, Glu-90, and Ser-113.

The protein belongs to the cyanase family.

The catalysed reaction is cyanate + hydrogencarbonate + 3 H(+) = NH4(+) + 2 CO2. In terms of biological role, catalyzes the reaction of cyanate with bicarbonate to produce ammonia and carbon dioxide. The protein is Cyanate hydratase of Pseudomonas putida (strain ATCC 700007 / DSM 6899 / JCM 31910 / BCRC 17059 / LMG 24140 / F1).